A 188-amino-acid chain; its full sequence is Protein GrpE (188 aa).

Residues 1–22 are compositionally biased toward low complexity; that stretch reads MEENKQNQNLNTEETTEQQTEA. Residues 1 to 26 form a disordered region; the sequence is MEENKQNQNLNTEETTEQQTEAETVE.

The protein belongs to the GrpE family. As to quaternary structure, homodimer.

It localises to the cytoplasm. In terms of biological role, participates actively in the response to hyperosmotic and heat shock by preventing the aggregation of stress-denatured proteins, in association with DnaK and GrpE. It is the nucleotide exchange factor for DnaK and may function as a thermosensor. Unfolded proteins bind initially to DnaJ; upon interaction with the DnaJ-bound protein, DnaK hydrolyzes its bound ATP, resulting in the formation of a stable complex. GrpE releases ADP from DnaK; ATP binding to DnaK triggers the release of the substrate protein, thus completing the reaction cycle. Several rounds of ATP-dependent interactions between DnaJ, DnaK and GrpE are required for fully efficient folding. The protein is Protein GrpE of Exiguobacterium sibiricum (strain DSM 17290 / CCUG 55495 / CIP 109462 / JCM 13490 / 255-15).